The sequence spans 407 residues: Phosphopentomutase (407 aa).

6 residues coordinate Mn(2+): aspartate 10, aspartate 306, histidine 311, aspartate 347, histidine 348, and histidine 359.

The protein belongs to the phosphopentomutase family. It depends on Mn(2+) as a cofactor.

The protein resides in the cytoplasm. The enzyme catalyses 2-deoxy-alpha-D-ribose 1-phosphate = 2-deoxy-D-ribose 5-phosphate. The catalysed reaction is alpha-D-ribose 1-phosphate = D-ribose 5-phosphate. It functions in the pathway carbohydrate degradation; 2-deoxy-D-ribose 1-phosphate degradation; D-glyceraldehyde 3-phosphate and acetaldehyde from 2-deoxy-alpha-D-ribose 1-phosphate: step 1/2. In terms of biological role, isomerase that catalyzes the conversion of deoxy-ribose 1-phosphate (dRib-1-P) and ribose 1-phosphate (Rib-1-P) to deoxy-ribose 5-phosphate (dRib-5-P) and ribose 5-phosphate (Rib-5-P), respectively. This is Phosphopentomutase from Yersinia enterocolitica serotype O:8 / biotype 1B (strain NCTC 13174 / 8081).